We begin with the raw amino-acid sequence, 278 residues long: MKPIYGLIGNPVAHSMSPDIHNAALKDLSLEGHYHAFRVENEDLEDAVKGMRALGIQGFNVTVPHKVSIMKHLDRIDESAEALGAVNTVRREKEGLVGYNTDGAGFLKSLKPSLDRPLSELSILLIGAGGAARAIFTTLAAETPKRLDVANRTPEKALAFTQRFDGEARALSLQEAEADLSAYDIVIQTTSVGMHPNVEAAPLSLANAKETCLVCDIIYNPLKTALLHEAEAKGLKTLDGVGMFIGQAALAFELWTGHEPNMEKMKSIVLQQLGGKSC.

Shikimate is bound by residues 15–17 (SMS) and Thr62. Residue Lys66 is the Proton acceptor of the active site. Glu78 serves as a coordination point for NADP(+). Shikimate-binding residues include Asn87 and Asp102. NADP(+) contacts are provided by residues 127–131 (GAGGA), 151–156 (NRTPEK), and Ile217. Tyr219 serves as a coordination point for shikimate. Gly240 is an NADP(+) binding site.

It belongs to the shikimate dehydrogenase family. As to quaternary structure, homodimer.

The catalysed reaction is shikimate + NADP(+) = 3-dehydroshikimate + NADPH + H(+). It functions in the pathway metabolic intermediate biosynthesis; chorismate biosynthesis; chorismate from D-erythrose 4-phosphate and phosphoenolpyruvate: step 4/7. Functionally, involved in the biosynthesis of the chorismate, which leads to the biosynthesis of aromatic amino acids. Catalyzes the reversible NADPH linked reduction of 3-dehydroshikimate (DHSA) to yield shikimate (SA). This Bacillus licheniformis (strain ATCC 14580 / DSM 13 / JCM 2505 / CCUG 7422 / NBRC 12200 / NCIMB 9375 / NCTC 10341 / NRRL NRS-1264 / Gibson 46) protein is Shikimate dehydrogenase (NADP(+)).